The chain runs to 61 residues: Large ribosomal subunit protein uL30 (61 aa).

This sequence belongs to the universal ribosomal protein uL30 family. Part of the 50S ribosomal subunit.

The polypeptide is Large ribosomal subunit protein uL30 (Chlorobium luteolum (strain DSM 273 / BCRC 81028 / 2530) (Pelodictyon luteolum)).